The sequence spans 1023 residues: StAR-related lipid transfer protein 8 (1023 aa).

Disordered stretches follow at residues 46–67 and 82–161; these read PMGS…SSCE and TVSL…KVSK. The segment covering 99–114 has biased composition (polar residues); it reads PSSSDRPLLSPTQGQE. Position 108 is a phosphoserine (Ser108). A compositionally biased stretch (basic residues) spans 120–130; it reads AKKRHRNRSFL. The span at 143-161 shows a compositional bias: polar residues; that stretch reads GSQQAEPKHSPATSEKVSK. The residue at position 169 (Arg169) is an Asymmetric dimethylarginine. A phosphoserine mark is found at Ser235 and Ser238. Positions 387–397 are enriched in low complexity; the sequence is PAQAPAEAEPV. Disordered regions lie at residues 387–461 and 467–486; these read PAQA…MNEA and LAGL…VGAS. The span at 441–459 shows a compositional bias: polar residues; that stretch reads ISDTVASSSELDSSGNSMN. 2 positions are modified to phosphoserine: Ser498 and Ser506. The region spanning 573–777 is the Rho-GAP domain; the sequence is PPLIHVQRTG…HMISDCKKLF (205 aa). The disordered stretch occupies residues 733–757; it reads KKDSPSPRIKSKRSLIGRPGPRDLS. In terms of domain architecture, START spans 809–1017; it reads AQAAGVSLSL…RDSFPTLQAA (209 aa).

As to quaternary structure, binds both the SH2 and PTB domains of TNS1. As to expression, widely expressed with highest levels in kidney, lung and placenta.

Its subcellular location is the cell junction. The protein resides in the focal adhesion. In terms of biological role, accelerates GTPase activity of RHOA and CDC42, but not RAC1. Stimulates the hydrolysis of phosphatidylinositol 4,5-bisphosphate by PLCD1. This Homo sapiens (Human) protein is StAR-related lipid transfer protein 8 (STARD8).